The sequence spans 894 residues: Phosphoenolpyruvate carboxylase (894 aa).

Residues H143 and K556 contribute to the active site.

It belongs to the PEPCase type 1 family. The cofactor is Mg(2+).

The catalysed reaction is oxaloacetate + phosphate = phosphoenolpyruvate + hydrogencarbonate. Its function is as follows. Forms oxaloacetate, a four-carbon dicarboxylic acid source for the tricarboxylic acid cycle. The chain is Phosphoenolpyruvate carboxylase from Acinetobacter baylyi (strain ATCC 33305 / BD413 / ADP1).